The chain runs to 377 residues: Lipoyl synthase, mitochondrial (377 aa).

Residues C98, C103, C109, C128, C132, C135, and S343 each coordinate [4Fe-4S] cluster. Residues 113-332 (KKSEATATIM…RDTALDMGFL (220 aa)) form the Radical SAM core domain.

It belongs to the radical SAM superfamily. Lipoyl synthase family. It depends on [4Fe-4S] cluster as a cofactor.

It is found in the mitochondrion. The enzyme catalyses [[Fe-S] cluster scaffold protein carrying a second [4Fe-4S](2+) cluster] + N(6)-octanoyl-L-lysyl-[protein] + 2 oxidized [2Fe-2S]-[ferredoxin] + 2 S-adenosyl-L-methionine + 4 H(+) = [[Fe-S] cluster scaffold protein] + N(6)-[(R)-dihydrolipoyl]-L-lysyl-[protein] + 4 Fe(3+) + 2 hydrogen sulfide + 2 5'-deoxyadenosine + 2 L-methionine + 2 reduced [2Fe-2S]-[ferredoxin]. The protein operates within protein modification; protein lipoylation via endogenous pathway; protein N(6)-(lipoyl)lysine from octanoyl-[acyl-carrier-protein]: step 2/2. Functionally, catalyzes the radical-mediated insertion of two sulfur atoms into the C-6 and C-8 positions of the octanoyl moiety bound to the lipoyl domains of lipoate-dependent enzymes, thereby converting the octanoylated domains into lipoylated derivatives. This Candida tropicalis (strain ATCC MYA-3404 / T1) (Yeast) protein is Lipoyl synthase, mitochondrial.